We begin with the raw amino-acid sequence, 78 residues long: uncharacterized protein (78 aa).

The chain crosses the membrane as a helical span at residues 21-43; sequence SPFLFGAPLVGGLLGGFLGSALF.

The protein resides in the membrane. This is an uncharacterized protein from Bacillus subtilis (strain 168).